The chain runs to 331 residues: Ribosomal large subunit pseudouridine synthase D (331 aa).

The 73-residue stretch at 25 to 97 folds into the S4 RNA-binding domain; that stretch reads RRFDAVLAEL…IPLDILYEDE (73 aa). Residue Asp-145 is part of the active site.

It belongs to the pseudouridine synthase RluA family.

It localises to the cytoplasm. The catalysed reaction is uridine(1911/1915/1917) in 23S rRNA = pseudouridine(1911/1915/1917) in 23S rRNA. Functionally, responsible for synthesis of pseudouridine from uracil at positions 1911, 1915 and 1917 in 23S ribosomal RNA. The protein is Ribosomal large subunit pseudouridine synthase D (rluD) of Xylella fastidiosa (strain Temecula1 / ATCC 700964).